The following is a 778-amino-acid chain: Putative ATP-dependent RNA helicase MJ1505 (778 aa).

In terms of domain architecture, Helicase ATP-binding spans 22–186 (IAANALKKKT…EICENLGIEH (165 aa)). 35-42 (LSTGLGKT) contributes to the ATP binding site. A DEAH box motif is present at residues 137–140 (DEAH). Positions 338 to 516 (KVVDMVKNIL…EIKEETEEIK (179 aa)) constitute a Helicase C-terminal domain.

It belongs to the DEAD box helicase family. DEAH subfamily.

The catalysed reaction is ATP + H2O = ADP + phosphate + H(+). The polypeptide is Putative ATP-dependent RNA helicase MJ1505 (Methanocaldococcus jannaschii (strain ATCC 43067 / DSM 2661 / JAL-1 / JCM 10045 / NBRC 100440) (Methanococcus jannaschii)).